The sequence spans 84 residues: UPF0457 protein BALH_2270 (84 aa).

It belongs to the UPF0457 family.

The sequence is that of UPF0457 protein BALH_2270 from Bacillus thuringiensis (strain Al Hakam).